Reading from the N-terminus, the 209-residue chain is ATP-dependent dethiobiotin synthetase BioD (209 aa).

ATP is bound at residue 13–18 (DVGKTV). Threonine 17 serves as a coordination point for Mg(2+). Residue lysine 33 is part of the active site. Position 100 (glutamate 100) interacts with Mg(2+). Residues 100–103 (EGAG) and 184–186 (PRL) each bind ATP.

Belongs to the dethiobiotin synthetase family. In terms of assembly, homodimer. Requires Mg(2+) as cofactor.

Its subcellular location is the cytoplasm. It catalyses the reaction (7R,8S)-7,8-diammoniononanoate + CO2 + ATP = (4R,5S)-dethiobiotin + ADP + phosphate + 3 H(+). The protein operates within cofactor biosynthesis; biotin biosynthesis; biotin from 7,8-diaminononanoate: step 1/2. Its function is as follows. Catalyzes a mechanistically unusual reaction, the ATP-dependent insertion of CO2 between the N7 and N8 nitrogen atoms of 7,8-diaminopelargonic acid (DAPA, also called 7,8-diammoniononanoate) to form a ureido ring. This Rhizorhabdus wittichii (strain DSM 6014 / CCUG 31198 / JCM 15750 / NBRC 105917 / EY 4224 / RW1) (Sphingomonas wittichii) protein is ATP-dependent dethiobiotin synthetase BioD.